A 363-amino-acid chain; its full sequence is S-adenosylmethionine:tRNA ribosyltransferase-isomerase (363 aa).

Belongs to the QueA family. In terms of assembly, monomer.

The protein localises to the cytoplasm. It carries out the reaction 7-aminomethyl-7-carbaguanosine(34) in tRNA + S-adenosyl-L-methionine = epoxyqueuosine(34) in tRNA + adenine + L-methionine + 2 H(+). It participates in tRNA modification; tRNA-queuosine biosynthesis. In terms of biological role, transfers and isomerizes the ribose moiety from AdoMet to the 7-aminomethyl group of 7-deazaguanine (preQ1-tRNA) to give epoxyqueuosine (oQ-tRNA). This Brucella abortus (strain S19) protein is S-adenosylmethionine:tRNA ribosyltransferase-isomerase.